Consider the following 232-residue polypeptide: Ubiquinone biosynthesis O-methyltransferase (232 aa).

S-adenosyl-L-methionine is bound by residues Arg36, Gly55, Asp76, and Leu120.

Belongs to the methyltransferase superfamily. UbiG/COQ3 family.

The catalysed reaction is a 3-demethylubiquinol + S-adenosyl-L-methionine = a ubiquinol + S-adenosyl-L-homocysteine + H(+). It catalyses the reaction a 3-(all-trans-polyprenyl)benzene-1,2-diol + S-adenosyl-L-methionine = a 2-methoxy-6-(all-trans-polyprenyl)phenol + S-adenosyl-L-homocysteine + H(+). The protein operates within cofactor biosynthesis; ubiquinone biosynthesis. O-methyltransferase that catalyzes the 2 O-methylation steps in the ubiquinone biosynthetic pathway. The polypeptide is Ubiquinone biosynthesis O-methyltransferase (Pseudomonas syringae pv. tomato (strain ATCC BAA-871 / DC3000)).